A 49-amino-acid polypeptide reads, in one-letter code: Large ribosomal subunit protein bL36 (49 aa).

It belongs to the bacterial ribosomal protein bL36 family.

In Delftia acidovorans (strain DSM 14801 / SPH-1), this protein is Large ribosomal subunit protein bL36.